A 186-amino-acid polypeptide reads, in one-letter code: Nuclear transcription factor Y subunit C-5 (186 aa).

The segment at 166–186 is disordered; the sequence is QMPGAWTEEDATGANGGNGGN.

This sequence belongs to the NFYC/HAP5 subunit family. Heterotrimeric transcription factor composed of three components, NF-YA, NF-YB and NF-YC. NF-YB and NF-YC must interact and dimerize for NF-YA association and DNA binding. As to expression, expressed in inflorescences and flowers.

It localises to the nucleus. Stimulates the transcription of various genes by recognizing and binding to a CCAAT motif in promoters. In Arabidopsis thaliana (Mouse-ear cress), this protein is Nuclear transcription factor Y subunit C-5 (NFYC5).